The sequence spans 334 residues: Adenosine deaminase (334 aa).

Positions 12 and 14 each coordinate Zn(2+). Substrate-binding residues include histidine 14, aspartate 16, and glycine 170. Histidine 197 is a binding site for Zn(2+). Glutamate 200 serves as the catalytic Proton donor. Aspartate 278 serves as a coordination point for Zn(2+). Substrate is bound at residue aspartate 279.

Belongs to the metallo-dependent hydrolases superfamily. Adenosine and AMP deaminases family. Adenosine deaminase subfamily. Requires Zn(2+) as cofactor.

The enzyme catalyses adenosine + H2O + H(+) = inosine + NH4(+). It carries out the reaction 2'-deoxyadenosine + H2O + H(+) = 2'-deoxyinosine + NH4(+). Catalyzes the hydrolytic deamination of adenosine and 2-deoxyadenosine. The sequence is that of Adenosine deaminase from Vibrio parahaemolyticus serotype O3:K6 (strain RIMD 2210633).